The primary structure comprises 393 residues: NAD(P)H-quinone oxidoreductase subunit H, chloroplastic (393 aa).

Belongs to the complex I 49 kDa subunit family. In terms of assembly, NDH is composed of at least 16 different subunits, 5 of which are encoded in the nucleus.

The protein localises to the plastid. It is found in the chloroplast thylakoid membrane. The enzyme catalyses a plastoquinone + NADH + (n+1) H(+)(in) = a plastoquinol + NAD(+) + n H(+)(out). It carries out the reaction a plastoquinone + NADPH + (n+1) H(+)(in) = a plastoquinol + NADP(+) + n H(+)(out). Functionally, NDH shuttles electrons from NAD(P)H:plastoquinone, via FMN and iron-sulfur (Fe-S) centers, to quinones in the photosynthetic chain and possibly in a chloroplast respiratory chain. The immediate electron acceptor for the enzyme in this species is believed to be plastoquinone. Couples the redox reaction to proton translocation, and thus conserves the redox energy in a proton gradient. The polypeptide is NAD(P)H-quinone oxidoreductase subunit H, chloroplastic (Zea mays (Maize)).